We begin with the raw amino-acid sequence, 1745 residues long: Tight junction protein 1 (1745 aa).

The PDZ 1 domain occupies 23–110; sequence TVTLHRAPGF…NAKITIRRKK (88 aa). Basic residues predominate over residues 102–112; it reads AKITIRRKKKV. The disordered stretch occupies residues 102–189; the sequence is AKITIRRKKK…QPAKPTKVTL (88 aa). Positions 123 to 136 are enriched in acidic residues; that stretch reads PVSDNEDDSYDEEV. A Phosphoserine modification is found at serine 125. Position 132 is a phosphotyrosine (tyrosine 132). Over residues 149–175 the composition is skewed to basic and acidic residues; the sequence is RRSEKSWARDRSASRERSLSPRSDRRS. Phosphoserine is present on residues serine 175, serine 178, and serine 179. Position 185 is a phosphothreonine (threonine 185). The PDZ 2 domain maps to 186–264; the sequence is KVTLVKSRKN…KLKMVVQRDE (79 aa). A phosphoserine mark is found at serine 212 and serine 241. At threonine 267 the chain carries Phosphothreonine. A phosphoserine mark is found at serine 275, serine 277, serine 280, serine 284, serine 290, serine 294, serine 297, serine 300, serine 323, serine 329, serine 334, serine 337, and serine 353. The segment at 296–364 is disordered; the sequence is ASDHSGRSHD…PVKHVDDHPP (69 aa). A compositionally biased stretch (basic and acidic residues) spans 299–308; that stretch reads HSGRSHDRPP. Residues 325–338 show a composition bias toward polar residues; sequence HSTQSPQQPSNGSL. The residue at position 354 (threonine 354) is a Phosphothreonine. The region spanning 421 to 502 is the PDZ 3 domain; the sequence is SMKLVKFRKG…GEEVTILAQK (82 aa). Residues 516-584 enclose the SH3 domain; the sequence is GDSFYIRTHF…PNKNRAEQLA (69 aa). A Guanylate kinase-like domain is found at 610–791; that stretch reads SKRNLRKSRE…WYGALKEAIQ (182 aa). A phosphoserine mark is found at serine 617 and serine 622. Positions 633-876 are occludin (OCLN)-binding region; sequence YERVVLREAG…GTPPESAITR (244 aa). Position 809 is a phosphothreonine (threonine 809). Phosphoserine occurs at positions 810 and 821. At tyrosine 822 the chain carries Phosphotyrosine. Phosphoserine is present on residues serine 824, serine 828, and serine 837. 2 disordered regions span residues 825–944 and 956–1042; these read APGS…SASA and LEEP…YEPQ. Phosphothreonine is present on residues threonine 846, threonine 848, threonine 854, threonine 861, and threonine 868. Basic and acidic residues predominate over residues 879–892; sequence EPVREDSSGMHHEN. A compositionally biased stretch (low complexity) spans 893 to 906; sequence QTYPPYSPQAQPQA. Serine 912 is modified (phosphoserine). The span at 998 to 1014 shows a compositional bias: basic and acidic residues; that stretch reads DPAKVYRKEPYSEEMMR. A Phosphoserine modification is found at serine 1071. The disordered stretch occupies residues 1090–1586; that stretch reads QWSYYDDKQP…STQPPEFDSG (497 aa). Basic and acidic residues predominate over residues 1106–1124; that stretch reads ENQHPRDLDSRQHPEEASE. Phosphoserine is present on serine 1138. 2 positions are modified to phosphotyrosine: tyrosine 1139 and tyrosine 1164. The tract at residues 1150 to 1370 is actin-binding region (ABR); sequence RTSTLRHEEQ…FDRRSFESKP (221 aa). 2 stretches are compositionally biased toward basic and acidic residues: residues 1268-1285 and 1335-1346; these read KMFE…KDVN and PPEDIVRSNHYD. Tyrosine 1353 is modified (phosphotyrosine). At serine 1365 the chain carries Phosphoserine. The segment covering 1388–1399 has biased composition (low complexity); that stretch reads SQSQPNFSSYSS. The span at 1401 to 1418 shows a compositional bias: basic and acidic residues; it reads GKPETDAVDRSFSEKRYD. The residue at position 1411 (serine 1411) is a Phosphoserine. The segment covering 1431–1445 has biased composition (low complexity); the sequence is SQYSQPAPPLSSSSL. Polar residues-rich tracts occupy residues 1455 to 1468 and 1510 to 1519; these read EGNS…NSYM and AEQTQKTITP. Residues 1535-1544 are compositionally biased toward basic and acidic residues; the sequence is PFERKFESPK. Serine 1542 bears the Phosphoserine mark. A compositionally biased stretch (polar residues) spans 1561 to 1580; the sequence is SSKTPTSPKTLMKAHSSTQP. The residue at position 1614 (serine 1614) is a Phosphoserine. In terms of domain architecture, ZU5 spans 1631 to 1745; the sequence is ATARGIFNSN…NCVSVLIDHF (115 aa).

This sequence belongs to the MAGUK family. In terms of assembly, homodimer. Forms heterodimers TJP3. Forms a heterodimer (via PDZ2 domain) with TJP2/ZO2 (via PDZ2 domain). Interacts with OCLN, CALM, claudins, CGN/cingulin, CXADR, GJD3 and UBN1. Interacts (via ZU5 domain) with CDC42BPB. Interacts (via PDZ domain) with GJA1. Interacts (via PDZ domains) with ANKRD2. Interacts with POPDC1 (via the C-terminus cytoplasmic tail). Interacts with GJA12 and KIRREL1. Interacts with HSPA4. Interacts (via ZU5 domain) with MYZAP. Interacts with DLL1. Interacts with USP53 (via the C-terminal region). Interacts with DNMBP (via C-terminal domain); required for the apical cell-cell junction localization of DNMBP. Interacts with SPEF1. Interacts (via N-terminus) with CTNNA1. Interacts with CLDN18. Interacts with CLDN16 (via TRV motif); this is a prerequisite for anchoring of CLDN16 at the tight junction. Interacts with PKP1; the interaction facilitates TJP1/ZO-1 localization to the plasma membrane. Interacts with PATJ (via PDZ1-6 domains); the interaction is required for attachment and extension of TJP1/ZO1 condensates along the apical cell interface. In terms of processing, phosphorylated at tyrosine redidues in response to epidermal growth factor (EGF). This response is dependent on an intact actin microfilament system. Dephosphorylated by PTPRJ. In terms of tissue distribution, expressed between ameloblasts, at ameloblast-ameloblast junctions and in the stratum intermedium during pre-secretory and secretory stages of tooth development (at protein level).

It localises to the cell membrane. Its subcellular location is the cell junction. The protein localises to the tight junction. It is found in the gap junction. The protein resides in the cytoplasm. It localises to the myofibril. Its subcellular location is the sarcomere. The protein localises to the i band. Tjp1, TjpP2, and Tjp3 are closely related scaffolding proteins that link tight junction (TJ) transmembrane proteins such as claudins, junctional adhesion molecules, and occludin to the actin cytoskeleton. Forms a multistranded TJP1/ZO1 condensate which elongates to form a tight junction belt, the belt is anchored at the apical cell membrane via interaction with PATJ. The tight junction acts to limit movement of substances through the paracellular space and as a boundary between the compositionally distinct apical and basolateral plasma membrane domains of epithelial and endothelial cells. Necessary for lumenogenesis, and particularly efficient epithelial polarization and barrier formation. Plays a role in the regulation of cell migration by targeting Cdc42bpb to the leading edge of migrating cells. Plays an important role in podosome formation and associated function, thus regulating cell adhesion and matrix remodeling. With Tjp2 and TJjp3, participates in the junctional retention and stability of the transcription factor Dbpa, but is not involved in its shuttling to the nucleus. May play a role in mediating cell morphology changes during ameloblast differentiation via its role in tight junctions. This Mus musculus (Mouse) protein is Tight junction protein 1.